We begin with the raw amino-acid sequence, 359 residues long: Adenosine deaminase (359 aa).

Zn(2+)-binding residues include H15 and H17. H17, D19, and G184 together coordinate substrate. H213 contributes to the Zn(2+) binding site. The active-site Proton donor is E216. D295 contributes to the Zn(2+) binding site. Substrate is bound at residue D296.

This sequence belongs to the metallo-dependent hydrolases superfamily. Adenosine and AMP deaminases family. Requires Zn(2+) as cofactor.

Its subcellular location is the cell membrane. It is found in the cell junction. The protein resides in the cytoplasmic vesicle lumen. The protein localises to the cytoplasm. It localises to the lysosome. The catalysed reaction is adenosine + H2O + H(+) = inosine + NH4(+). The enzyme catalyses 2'-deoxyadenosine + H2O + H(+) = 2'-deoxyinosine + NH4(+). Its function is as follows. Catalyzes the hydrolytic deamination of adenosine and 2-deoxyadenosine. Plays an important role in purine metabolism and in adenosine homeostasis. Modulates signaling by extracellular adenosine, and so contributes indirectly to cellular signaling events. May act as a positive regulator of T-cell coactivation. The chain is Adenosine deaminase (ada) from Danio rerio (Zebrafish).